Here is a 201-residue protein sequence, read N- to C-terminus: Large ribosomal subunit protein bL25 (201 aa).

Belongs to the bacterial ribosomal protein bL25 family. CTC subfamily. As to quaternary structure, part of the 50S ribosomal subunit; part of the 5S rRNA/L5/L18/L25 subcomplex. Contacts the 5S rRNA. Binds to the 5S rRNA independently of L5 and L18.

Its function is as follows. This is one of the proteins that binds to the 5S RNA in the ribosome where it forms part of the central protuberance. This is Large ribosomal subunit protein bL25 from Burkholderia vietnamiensis (strain G4 / LMG 22486) (Burkholderia cepacia (strain R1808)).